The primary structure comprises 190 residues: MSCSRTVALLAALWLVVGATSSPVRRSPDLEARRRSAIDRSMIRFGRSYPPEPSAADIREAFERPTRRGNSFLRFGRSQPLTLSTDDLVSLLRAYEEDYDTPMTKKSASFVRFGRDPNFIRLGRSADDDKSAFEQNSELVVSGYPQRKSRARDHFIRLGRDSEEVNENEFEETEESRRKRSADSCHDCQS.

An N-terminal signal peptide occupies residues 1-21; sequence MSCSRTVALLAALWLVVGATS. Residues 22-33 constitute a propeptide that is removed on maturation; that stretch reads SPVRRSPDLEAR. Phenylalanine amide is present on Phe-45. The propeptide occupies 69–104; sequence GNSFLRFGRSQPLTLSTDDLVSLLRAYEEDYDTPMT. Phe-113 bears the Phenylalanine amide mark. A propeptide spanning residues 116–150 is cleaved from the precursor; it reads DPNFIRLGRSADDDKSAFEQNSELVVSGYPQRKSR. A Leucine amide modification is found at Leu-158. A propeptide spanning residues 160–190 is cleaved from the precursor; sequence RDSEEVNENEFEETEESRRKRSADSCHDCQS. Positions 161-190 are disordered; sequence DSEEVNENEFEETEESRRKRSADSCHDCQS. Residues 164-174 show a composition bias toward acidic residues; that stretch reads EVNENEFEETE. Residues 175-190 show a composition bias toward basic and acidic residues; sequence ESRRKRSADSCHDCQS.

This sequence belongs to the FARP (FMRFamide related peptide) family. In terms of tissue distribution, RFamide 1: Expressed in corpora cardiaca (CC), corpora allata (CA), antennal lobe (AL) and gnathal ganglion (GNG) (at protein level). Expression in AL detected in most animals, in CC, CA and in GNG in some animals (at protein level). RFamide precursor-related peptide 2: Expressed in corpora cardiaca (CC), corpora allata (CA), antennal lobe (AL) and gnathal ganglion (GNG) (at protein level). Expression in AL detected in some animals, expression in CC, CA and GNG in few animals (at protein level). RFamide 3: Expressed in corpora cardiaca (CC), corpora allata (CA), antennal lobe (AL) and gnathal ganglion (GNG) (at protein level). Expression in AL detected in all animals, in CC, CA and GNG in most animals (at protein level). RFamide 5: Expressed in corpora cardiaca (CC), corpora allata (CA), antennal lobe (AL) and gnathal ganglion (GNG) (at protein level). Expression in AL detected in all animals, in CC, CA and in GNG in some animals (at protein level).

Its subcellular location is the secreted. Functionally, in insects, FMRFamide and related peptides have modulatory actions at skeletal neuromuscular junctions, and peptides that are immunologically related to FMRFamide are released into the circulation from neurohemal organs. The sequence is that of FMRFamide-related peptides from Agrotis ipsilon (Black cutworm moth).